The sequence spans 600 residues: MSDKQQFIRNFSIIAHIDHGKSTLADRLLEIGQVTNDRTKKDQILDSMDIERERGITIKANNATFDYLAEDGNTYIMNLLDTPGHVDFTYEVSRSLKACEGVLLIVDASQGVEAQTLANLYLAMEQDLEILPVMNKIDLPAADVEKTKIQIEESLGLDPQKAVAISAKTGLNVKEVLEQITKQIPSPKGNSNAPLKALVYDSYFDPYMGVVIKIRIFDGRIKKGDRILMMSTGKDFTVNEVGINRINLTPKESLETGEVGYIIAGIKKVSDAKTGDTVTLFSNPTKESVPGYKEAKPMVFAGLFPINGEQFDELVDAIEKLKLNDAALVFEKESSIALGFGFRVGYLGLLHMEIVQERLEREFNLDLITTAPSVKYIIRSKNGEVEEIDNPSRFPEPITIESTEEPYVKATVITPNEYVGNIMSLAMDKRGIQLDTVYLTQDKVQLTYEIPLAELIFEFYDKLKSFTRGYASLDYEPSGYKASQLVKMDILVNGEPVDALSMIVHRSKAEQRGREIIEKLKDLIPRHQFMIPLQAAVGGKILARESISALRKNVTAKCYGGDITRKKKLLEKQKEGKKRMKQIGNVEIPQEAFLAVLKTS.

The tr-type G domain occupies 6 to 188 (QFIRNFSIIA…QITKQIPSPK (183 aa)). GTP contacts are provided by residues 18–23 (DHGKST) and 135–138 (NKID).

The protein belongs to the TRAFAC class translation factor GTPase superfamily. Classic translation factor GTPase family. LepA subfamily.

The protein localises to the cell inner membrane. The catalysed reaction is GTP + H2O = GDP + phosphate + H(+). Functionally, required for accurate and efficient protein synthesis under certain stress conditions. May act as a fidelity factor of the translation reaction, by catalyzing a one-codon backward translocation of tRNAs on improperly translocated ribosomes. Back-translocation proceeds from a post-translocation (POST) complex to a pre-translocation (PRE) complex, thus giving elongation factor G a second chance to translocate the tRNAs correctly. Binds to ribosomes in a GTP-dependent manner. The sequence is that of Elongation factor 4 from Leptospira interrogans serogroup Icterohaemorrhagiae serovar copenhageni (strain Fiocruz L1-130).